The following is a 197-amino-acid chain: Beta-crystallin A2 (197 aa).

Residues 1 to 11 (MSGTLSQGSSP) form an N-terminal arm region. Beta/gamma crystallin 'Greek key' domains are found at residues 12–52 (ARLT…KVES) and 53–99 (GAWV…RPLL). The segment at 100–105 (CANHSD) is connecting peptide. Beta/gamma crystallin 'Greek key' domains are found at residues 106–147 (SRVT…KVTS) and 148–196 (GAWV…RRVQ).

Belongs to the beta/gamma-crystallin family. As to quaternary structure, homo/heterodimer, or complexes of higher-order. The structure of beta-crystallin oligomers seems to be stabilized through interactions between the N-terminal arms.

In terms of biological role, crystallins are the dominant structural components of the vertebrate eye lens. The protein is Beta-crystallin A2 (CRYBA2) of Macropus fuliginosus (Western gray kangaroo).